Reading from the N-terminus, the 590-residue chain is V-type ATP synthase alpha chain (590 aa).

Position 232–239 (232–239 (GPFGSGKT)) interacts with ATP.

The protein belongs to the ATPase alpha/beta chains family.

The enzyme catalyses ATP + H2O + 4 H(+)(in) = ADP + phosphate + 5 H(+)(out). In terms of biological role, produces ATP from ADP in the presence of a proton gradient across the membrane. The V-type alpha chain is a catalytic subunit. In Thermoanaerobacter pseudethanolicus (strain ATCC 33223 / 39E) (Clostridium thermohydrosulfuricum), this protein is V-type ATP synthase alpha chain.